A 396-amino-acid chain; its full sequence is uncharacterized protein (396 aa).

It belongs to the mycobacterial PPE family.

This is an uncharacterized protein from Mycobacterium tuberculosis (strain CDC 1551 / Oshkosh).